The primary structure comprises 384 residues: Probable endopolygalacturonase C (384 aa).

Residues 1–19 (MVRQLALACGLLAAVAVQA) form the signal peptide. Positions 20–40 (APAEPAHPMVTEAPDASLLHK) are excised as a propeptide. Cys-45 and Cys-63 are disulfide-bonded. PbH1 repeat units lie at residues 176–207 (ATDL…DIGE) and 208–229 (STDI…AINS). The active-site Proton donor is Asp-222. Cys-224 and Cys-240 are disulfide-bonded. Residue His-244 is part of the active site. PbH1 repeat units follow at residues 254-280 (RDDN…RIKA) and 288-310 (ISDI…VIEQ). An N-linked (GlcNAc...) asparagine glycan is attached at Asn-261. 2 disulfide bridges follow: Cys-349-Cys-354 and Cys-373-Cys-382.

It belongs to the glycosyl hydrolase 28 family.

It is found in the secreted. It catalyses the reaction (1,4-alpha-D-galacturonosyl)n+m + H2O = (1,4-alpha-D-galacturonosyl)n + (1,4-alpha-D-galacturonosyl)m.. In terms of biological role, involved in maceration and soft-rotting of plant tissue. Hydrolyzes the 1,4-alpha glycosidic bonds of de-esterified pectate in the smooth region of the plant cell wall. The sequence is that of Probable endopolygalacturonase C (pgaC) from Aspergillus aculeatus.